Reading from the N-terminus, the 312-residue chain is Acetyl-coenzyme A carboxylase carboxyl transferase subunit alpha (312 aa).

A CoA carboxyltransferase C-terminal domain is found at 36-286; it reads RLDKEVKSIY…KEYFLDALRT (251 aa).

It belongs to the AccA family. As to quaternary structure, acetyl-CoA carboxylase is a heterohexamer composed of biotin carboxyl carrier protein (AccB), biotin carboxylase (AccC) and two subunits each of ACCase subunit alpha (AccA) and ACCase subunit beta (AccD).

The protein resides in the cytoplasm. The enzyme catalyses N(6)-carboxybiotinyl-L-lysyl-[protein] + acetyl-CoA = N(6)-biotinyl-L-lysyl-[protein] + malonyl-CoA. Its pathway is lipid metabolism; malonyl-CoA biosynthesis; malonyl-CoA from acetyl-CoA: step 1/1. Component of the acetyl coenzyme A carboxylase (ACC) complex. First, biotin carboxylase catalyzes the carboxylation of biotin on its carrier protein (BCCP) and then the CO(2) group is transferred by the carboxyltransferase to acetyl-CoA to form malonyl-CoA. This Helicobacter pylori (strain HPAG1) protein is Acetyl-coenzyme A carboxylase carboxyl transferase subunit alpha.